The following is a 213-amino-acid chain: Probable aspartate aminotransferase (213 aa).

Residues glycine 47, tryptophan 133, and asparagine 183 each contribute to the L-aspartate site.

This sequence belongs to the class-I pyridoxal-phosphate-dependent aminotransferase family. In terms of assembly, homodimer. It depends on pyridoxal 5'-phosphate as a cofactor.

The protein resides in the cytoplasm. It carries out the reaction L-aspartate + 2-oxoglutarate = oxaloacetate + L-glutamate. In Streptomyces griseus, this protein is Probable aspartate aminotransferase (aspC).